We begin with the raw amino-acid sequence, 539 residues long: Acid-sensing ion channel 4 (539 aa).

Residues 1–68 are Cytoplasmic-facing; it reads MPIEIVCKIK…GPGPHGLRRT (68 aa). The helical transmembrane segment at 69–89 threads the bilayer; that stretch reads LWALALLTSLAAFLYQAAGLA. Over 90–438 the chain is Extracellular; it reads RGYLTRPHLV…EQRAAYGLSA (349 aa). 2 disulfide bridges follow: Cys118–Cys202 and Cys180–Cys187. N-linked (GlcNAc...) asparagine glycans are attached at residues Asn191 and Asn243. Cystine bridges form between Cys296/Cys375, Cys318/Cys371, Cys322/Cys369, Cys331/Cys353, and Cys333/Cys345. Asn376 carries N-linked (GlcNAc...) asparagine glycosylation. Residues 439-459 form a helical membrane-spanning segment; that stretch reads LLGDLGGQMGLFIGASILTLL. Residues 452–454 carry the GAS motif; ion selectivity filter motif; it reads GAS. Topologically, residues 460–539 are cytoplasmic; the sequence is EILDYIYEVS…PGGLFEDFAC (80 aa). The tract at residues 501-531 is disordered; it reads EQSPCPSRGRVEGGGVSSLLPNHHHPHGPPG.

Belongs to the amiloride-sensitive sodium channel (TC 1.A.6) family. ASIC4 subfamily. As to quaternary structure, homotrimer. Heterotrimer; with other ASIC proteins producing functional channels. In terms of tissue distribution, expressed in pituitary gland. Weakly expressed in brain, vestibular system and organ of Corti.

The protein resides in the cell membrane. Functionally, does not exhibit measurable stand-alone pH-gated sodium channel activity but may form pH-gated heterotrimeric sodium channels. Its activity could also depend on alternative gating mechanisms. The sequence is that of Acid-sensing ion channel 4 from Homo sapiens (Human).